A 283-amino-acid chain; its full sequence is GTPase Era (283 aa).

The 169-residue stretch at 7 to 175 (YCGHVIIVGK…KNIIKSYLPE (169 aa)) folds into the Era-type G domain. The interval 15–22 (GKANVGKS) is G1. 15–22 (GKANVGKS) lines the GTP pocket. The interval 41 to 45 (NTTQS) is G2. A G3 region spans residues 62-65 (DTPG). Residues 62–66 (DTPGV) and 124–127 (NKID) each bind GTP. The interval 124 to 127 (NKID) is G4. Residues 154–156 (ISA) form a G5 region. In terms of domain architecture, KH type-2 spans 198–283 (IREQLILFLG…HLVLWVKDKN (86 aa)).

The protein belongs to the TRAFAC class TrmE-Era-EngA-EngB-Septin-like GTPase superfamily. Era GTPase family. As to quaternary structure, monomer.

It is found in the cytoplasm. The protein resides in the cell membrane. Functionally, an essential GTPase that binds both GDP and GTP, with rapid nucleotide exchange. Plays a role in 16S rRNA processing and 30S ribosomal subunit biogenesis and possibly also in cell cycle regulation and energy metabolism. In Buchnera aphidicola subsp. Acyrthosiphon pisum (strain Tuc7), this protein is GTPase Era.